The primary structure comprises 205 residues: Ribonuclease HII (205 aa).

One can recognise an RNase H type-2 domain in the interval 16–205; the sequence is VSEVGIDEVG…KSFLKKSKLI (190 aa). The a divalent metal cation site is built by D22, E23, and D118.

The protein belongs to the RNase HII family. The cofactor is Mn(2+). Mg(2+) is required as a cofactor.

The protein resides in the cytoplasm. It carries out the reaction Endonucleolytic cleavage to 5'-phosphomonoester.. Its function is as follows. Endonuclease that specifically degrades the RNA of RNA-DNA hybrids. The chain is Ribonuclease HII from Prochlorococcus marinus (strain AS9601).